The primary structure comprises 338 residues: Serine/threonine-protein kinase YabT (338 aa).

The Protein kinase domain occupies 28–286 (YTLRKQLGKG…PIKASPQPAT (259 aa)). ATP contacts are provided by residues 34-42 (LGKGANGIV) and Lys-55. Asp-148 (proton acceptor) is an active-site residue. Residues 266 to 312 (DAGQKAAQRKQPIKASPQPATRQRQQKPRQGKITKTRYTPKQKPAKS) are disordered. A compositionally biased stretch (basic residues) spans 289–309 (RQQKPRQGKITKTRYTPKQKP).

This sequence belongs to the protein kinase superfamily. Ser/Thr protein kinase family. Post-translationally, autophosphorylated.

The catalysed reaction is L-seryl-[protein] + ATP = O-phospho-L-seryl-[protein] + ADP + H(+). It catalyses the reaction L-threonyl-[protein] + ATP = O-phospho-L-threonyl-[protein] + ADP + H(+). Plays a role in the cell's commitment to sporulation; phosphorylates DNA replication initiation-control protein YabA. Deletion of this kinase delays entry into sporulation but does not affect final spore yield. Overexpression decreases biofilm formation; phosphorylation of YabA probably prevents biofilm formation. This is Serine/threonine-protein kinase YabT (yabT) from Bacillus subtilis (strain 168).